A 322-amino-acid polypeptide reads, in one-letter code: Sideroflexin-1 (322 aa).

N-acetylserine is present on Ser-2. The Mitochondrial matrix segment spans residues Ser-2–Thr-102. Residues Ile-103–Trp-120 traverse the membrane as a helical segment. At Gln-121–Glu-146 the chain is on the mitochondrial intermembrane side. A helical membrane pass occupies residues Leu-147–Ala-167. Residues Leu-168–Pro-174 lie on the Mitochondrial matrix side of the membrane. A helical transmembrane segment spans residues Leu-175–Leu-195. Topologically, residues Met-196–Gln-228 are mitochondrial intermembrane. The helical transmembrane segment at Val-229–Asn-249 threads the bilayer. Over Thr-250–Pro-266 the chain is Mitochondrial matrix. Residues Ile-267–Phe-287 traverse the membrane as a helical segment. Residues Pro-288–Leu-322 are Mitochondrial intermembrane-facing.

The protein belongs to the sideroflexin family. In terms of tissue distribution, widely expressed, with highest expression in kidney and liver.

Its subcellular location is the mitochondrion inner membrane. It catalyses the reaction L-serine(in) = L-serine(out). It carries out the reaction L-alanine(in) = L-alanine(out). The catalysed reaction is L-cysteine(in) = L-cysteine(out). Functionally, amino acid transporter importing serine, an essential substrate of the mitochondrial branch of the one-carbon pathway, into mitochondria. Mitochondrial serine is then converted to glycine and formate, which exits to the cytosol where it is used to generate the charged folates that serve as one-carbon donors. May also transport other amino acids including alanine and cysteine. In Mus musculus (Mouse), this protein is Sideroflexin-1.